The following is a 106-amino-acid chain: Putative double-stranded DNA mimic protein VV1228 (106 aa).

The protein belongs to the putative dsDNA mimic protein family.

Functionally, may act as a double-stranded DNA (dsDNA) mimic. Probably regulates the activity of a dsDNA-binding protein. In Vibrio vulnificus (strain YJ016), this protein is Putative double-stranded DNA mimic protein VV1228.